A 265-amino-acid chain; its full sequence is Tryptophan 2,3-dioxygenase (265 aa).

Substrate-binding positions include 38 to 42 (FIVVH) and R104. Heme is bound at residue H223. Substrate is bound at residue T237.

Belongs to the tryptophan 2,3-dioxygenase family. In terms of assembly, homotetramer. Heme serves as cofactor.

It carries out the reaction L-tryptophan + O2 = N-formyl-L-kynurenine. It participates in amino-acid degradation; L-tryptophan degradation via kynurenine pathway; L-kynurenine from L-tryptophan: step 1/2. Functionally, heme-dependent dioxygenase that catalyzes the oxidative cleavage of the L-tryptophan (L-Trp) pyrrole ring and converts L-tryptophan to N-formyl-L-kynurenine. Catalyzes the oxidative cleavage of the indole moiety. The sequence is that of Tryptophan 2,3-dioxygenase from Anaeromyxobacter dehalogenans (strain 2CP-C).